An 89-amino-acid chain; its full sequence is Large ribosomal subunit protein bL28 (89 aa).

It belongs to the bacterial ribosomal protein bL28 family.

The chain is Large ribosomal subunit protein bL28 from Chlamydia pneumoniae (Chlamydophila pneumoniae).